The primary structure comprises 629 residues: tRNA uridine 5-carboxymethylaminomethyl modification enzyme MnmG (629 aa).

FAD contacts are provided by residues 14 to 19, Val126, and Ser181; that span reads GAGHAG. 273–287 serves as a coordination point for NAD(+); the sequence is GPRYCPSIEDKVVRF. An FAD-binding site is contributed by Gln370.

Belongs to the MnmG family. In terms of assembly, homodimer. Heterotetramer of two MnmE and two MnmG subunits. Requires FAD as cofactor.

It is found in the cytoplasm. NAD-binding protein involved in the addition of a carboxymethylaminomethyl (cmnm) group at the wobble position (U34) of certain tRNAs, forming tRNA-cmnm(5)s(2)U34. This is tRNA uridine 5-carboxymethylaminomethyl modification enzyme MnmG from Bacillus cereus (strain ATCC 14579 / DSM 31 / CCUG 7414 / JCM 2152 / NBRC 15305 / NCIMB 9373 / NCTC 2599 / NRRL B-3711).